A 541-amino-acid polypeptide reads, in one-letter code: Chaperonin GroEL 1 (541 aa).

Residues 29-32 (TLGP), 86-90 (DGTTT), Gly-413, 478-480 (NAA), and Asp-494 each bind ATP. Residues 520–541 (VVEKPAEAEDDGHGHGHGHHHH) are disordered. Basic and acidic residues predominate over residues 523-533 (KPAEAEDDGHG).

This sequence belongs to the chaperonin (HSP60) family. Forms a cylinder of 14 subunits composed of two heptameric rings stacked back-to-back. Interacts with the co-chaperonin GroES.

Its subcellular location is the cytoplasm. It carries out the reaction ATP + H2O + a folded polypeptide = ADP + phosphate + an unfolded polypeptide.. Together with its co-chaperonin GroES, plays an essential role in assisting protein folding. The GroEL-GroES system forms a nano-cage that allows encapsulation of the non-native substrate proteins and provides a physical environment optimized to promote and accelerate protein folding. This Mycolicibacterium gilvum (strain PYR-GCK) (Mycobacterium gilvum (strain PYR-GCK)) protein is Chaperonin GroEL 1.